Reading from the N-terminus, the 711-residue chain is Polyribonucleotide nucleotidyltransferase (711 aa).

Residues D486 and D492 each contribute to the Mg(2+) site. Positions 553 to 612 (PRIHTIKINPDKIKDVIGKGGSVIRALTEETGTTIEIEDDGTVKIAATDGEKAKHAIRRI) constitute a KH domain. Residues 622–690 (GRVYTGKVTR…RQGRIRLSIK (69 aa)) enclose the S1 motif domain. The disordered stretch occupies residues 690–711 (KEATEQSQPAAAPEAPAAEQGE). The span at 694-711 (EQSQPAAAPEAPAAEQGE) shows a compositional bias: low complexity.

The protein belongs to the polyribonucleotide nucleotidyltransferase family. As to quaternary structure, component of the RNA degradosome, which is a multiprotein complex involved in RNA processing and mRNA degradation. Requires Mg(2+) as cofactor.

It is found in the cytoplasm. The enzyme catalyses RNA(n+1) + phosphate = RNA(n) + a ribonucleoside 5'-diphosphate. In terms of biological role, involved in mRNA degradation. Catalyzes the phosphorolysis of single-stranded polyribonucleotides processively in the 3'- to 5'-direction. The protein is Polyribonucleotide nucleotidyltransferase of Shigella dysenteriae serotype 1 (strain Sd197).